We begin with the raw amino-acid sequence, 768 residues long: Multidomain esterase (768 aa).

The signal sequence occupies residues 1–40; sequence MKKHFVVGETIKRFLRIGTSLALSISTLSLLPSAPRLSSA. The interval 41 to 264 is acetylxylan esterase; the sequence is AGTIKIMPLG…YWLEQIEGYL (224 aa). Residue Ser-68 is the Nucleophile; for acetylxylan esterase activity of the active site. Catalysis depends on for acetylxylan esterase activity residues Asp-240 and His-243. Positions 267-283 are enriched in low complexity; that stretch reads SDGPQQTQPTQPSQGDS. Residues 267–289 are disordered; sequence SDGPQQTQPTQPSQGDSGPELIY. The 68-residue stretch at 285–352 folds into the Dockerin domain; that stretch reads PELIYGDLDG…IIGKIKEFTV (68 aa). The interval 353–768 is glucuronoyl esterase; the sequence is AEKTVTEKPV…ADTFASKWLY (416 aa). The short motif at 563-568 is the GXSYXG catalytic site motif element; it reads GVSRYG. The active-site Nucleophile; for glucuronoyl esterase activity is the Ser-565. Substrate contacts are provided by Lys-569, Glu-633, and Trp-679.

The protein in the N-terminal section; belongs to the carbohydrate esterase 3 (CE3) family. In the C-terminal section; belongs to the carbohydrate esterase 15 (CE15) family.

The protein resides in the secreted. The enzyme catalyses Deacetylation of xylans and xylo-oligosaccharides.. The catalysed reaction is a 4-O-methyl-alpha-D-glucuronosyl ester derivative + H2O = 4-O-methyl-alpha-D-glucuronate derivative + an alcohol + H(+). It functions in the pathway glycan degradation; xylan degradation. Its function is as follows. Esterase involved in the degradation of plant cell wall polysaccharides. Catalyzes the deacetylation of chemically acetylated xylan and native, steam-extracted xylan. Seems to act in synergy with the xylanase XynD which produces xylo-oligosaccharides. Also catalyzes the deesterification of methyl esters of 4-O-methyl-D-glucuronic acid (MeGlcA) side residues in synthetic glucuronoxylan methyl ester, suggesting that it may be able to cleave ester linkages between MeGlcA carboxyl and more complex alcohols, including linkages between hemicellulose and lignin alcohols in plant cell walls. This Ruminococcus flavefaciens protein is Multidomain esterase.